The sequence spans 404 residues: L-cysteine:1D-myo-inositol 2-amino-2-deoxy-alpha-D-glucopyranoside ligase (404 aa).

Residue C47 participates in Zn(2+) binding. L-cysteinyl-5'-AMP contacts are provided by residues 47–50 (CGIT), T62, and 85–87 (NIT). A 'HIGH' region motif is present at residues 49–59 (ITPYDSTHLGH). The 'ERGGDP' region signature appears at 188–193 (ERGGDP). W228 is a binding site for L-cysteinyl-5'-AMP. C232 contributes to the Zn(2+) binding site. Residue 250-252 (GSD) coordinates L-cysteinyl-5'-AMP. H257 contributes to the Zn(2+) binding site. I284 provides a ligand contact to L-cysteinyl-5'-AMP. The 'KMSKS' region motif lies at 290-294 (KMSKS).

This sequence belongs to the class-I aminoacyl-tRNA synthetase family. MshC subfamily. In terms of assembly, monomer. The cofactor is Zn(2+).

It catalyses the reaction 1D-myo-inositol 2-amino-2-deoxy-alpha-D-glucopyranoside + L-cysteine + ATP = 1D-myo-inositol 2-(L-cysteinylamino)-2-deoxy-alpha-D-glucopyranoside + AMP + diphosphate + H(+). In terms of biological role, catalyzes the ATP-dependent condensation of GlcN-Ins and L-cysteine to form L-Cys-GlcN-Ins. The chain is L-cysteine:1D-myo-inositol 2-amino-2-deoxy-alpha-D-glucopyranoside ligase from Corynebacterium striatum.